We begin with the raw amino-acid sequence, 1809 residues long: Stereocilin (1809 aa).

An N-terminal signal peptide occupies residues Met1 to Ser22. Asn63, Asn200, Asn295, Asn352, and Asn364 each carry an N-linked (GlcNAc...) asparagine glycan. Residues Pro376–Ser426 are disordered. 2 stretches are compositionally biased toward pro residues: residues Thr378 to Thr399 and Thr407 to Ser426. N-linked (GlcNAc...) asparagine glycans are attached at residues Asn467, Asn516, Asn580, Asn605, Asn696, Asn860, Asn952, Asn1000, Asn1213, and Asn1308.

It belongs to the stereocilin family. In terms of tissue distribution, strongly expressed in the inner ear, detected in the testis, and barely detected in the eye. Detected in the six sensory areas of the inner ear by immunofluorescence. Expressed only in the sensory hair cells and associated with the stereocilia, the stiff microvilli forming the structure for mechanoreception of sound stimulation.

The protein resides in the cell surface. It localises to the cell projection. The protein localises to the kinocilium. Its subcellular location is the stereocilium. Essential to the formation of horizontal top connectors between outer hair cell stereocilia. This is Stereocilin (Strc) from Mus musculus (Mouse).